The primary structure comprises 894 residues: Probable cytoplasmic aconitate hydratase (894 aa).

Residues glutamine 87 and 207–209 (DSH) each bind substrate. Residues cysteine 438, cysteine 504, and cysteine 507 each coordinate [4Fe-4S] cluster. Residues arginine 537, arginine 542, and 781–782 (SR) each bind substrate.

The protein belongs to the aconitase/IPM isomerase family. Requires [4Fe-4S] cluster as cofactor.

The protein resides in the cytoplasm. The protein localises to the cytosol. The catalysed reaction is citrate = D-threo-isocitrate. Catalyzes the isomerization of citrate to isocitrate via cis-aconitate. This Dictyostelium discoideum (Social amoeba) protein is Probable cytoplasmic aconitate hydratase (aco1).